We begin with the raw amino-acid sequence, 1002 residues long: ATP-dependent DNA helicase MPH1 (1002 aa).

In terms of domain architecture, Helicase ATP-binding spans 108 to 275; that stretch reads IVRCALFENV…EVVNNLHISK (168 aa). Residue 121-128 participates in ATP binding; it reads IPTGTGKT. Positions 223 to 226 match the DEAH box motif; sequence DEAH. Residues 506–669 enclose the Helicase C-terminal domain; that stretch reads DEETYIRKNK…ALEYTKSDRI (164 aa). The segment covering 531 to 551 has biased composition (basic and acidic residues); that stretch reads ENRVEEEKKRQKEQAKLERTG. Disordered stretches follow at residues 531-569 and 799-843; these read ENRVEEEKKRQKEQAKLERTGRRTGSSEEAQLSGMNQKQ and AKSQ…DSHT. The span at 553-568 shows a compositional bias: polar residues; that stretch reads RTGSSEEAQLSGMNQK.

The protein belongs to the DEAD box helicase family. DEAH subfamily. FANCM sub-subfamily. As to quaternary structure, interacts with the MHF histone-fold complex to form the FANCM-MHF complex.

It localises to the nucleus. The enzyme catalyses ATP + H2O = ADP + phosphate + H(+). In terms of biological role, ATP-dependent DNA helicase involved in DNA damage repair by homologous recombination and in genome maintenance. Capable of unwinding D-loops. Plays a role in limiting crossover recombinants during mitotic DNA double-strand break (DSB) repair. Component of a FANCM-MHF complex which promotes gene conversion at blocked replication forks, probably by reversal of the stalled fork. This is ATP-dependent DNA helicase MPH1 from Kluyveromyces lactis (strain ATCC 8585 / CBS 2359 / DSM 70799 / NBRC 1267 / NRRL Y-1140 / WM37) (Yeast).